A 62-amino-acid chain; its full sequence is Short neurotoxin A (62 aa).

Residues 1-16 (RRCFNHPSSQPQTNKS) show a composition bias toward polar residues. Residues 1–21 (RRCFNHPSSQPQTNKSCPPGE) form a disordered region. 4 disulfide bridges follow: C3-C24, C17-C41, C43-C54, and C55-C60.

Belongs to the three-finger toxin family. Short-chain subfamily. Type I alpha-neurotoxin sub-subfamily. Expressed by the venom gland.

The protein localises to the secreted. In terms of biological role, binds to muscle nicotinic acetylcholine receptor (nAChR) and inhibit acetylcholine from binding to the receptor, thereby impairing neuromuscular transmission. This chain is Short neurotoxin A, found in Laticauda crockeri (Crocker's sea snake).